The primary structure comprises 244 residues: MSTSKRKRGDDSNWSKRVTKKKPSSAGLKRAGSKADRPSLQIQTLQHAGTTMITVPSGGVCDLINTYARGSDEGNRHTSETLTYKIAIDYHFVADAAACRYSNTGTGVMWLVYDTTPGGQAPTPQTIFAYPDTLKAWPATWKVSRELCHRFVVKRRWLFNMETDGRIGSDIPPSNASWKPCKRNIYFHKFTSGLGVRTQWKNVTDGGVGAIQRGALYMVIAPGNGLTFTAHGQTRLYFKSVGNQ.

The short motif at 1–24 (MSTSKRKRGDDSNWSKRVTKKKPS) is the Bipartite nuclear localization signal element. Residues 1 to 39 (MSTSKRKRGDDSNWSKRVTKKKPSSAGLKRAGSKADRPS) form a disordered region.

It belongs to the geminiviridae capsid protein family. Homomultimer. Interacts with the movement protein. Binds to single-stranded and double-stranded viral DNA.

It localises to the virion. The protein resides in the host nucleus. In terms of biological role, encapsidates the viral genome into characteristic twinned ('geminate') particles. Binds the genomic viral ssDNA and shuttles it into and out of the cell nucleus. Plays a role in protection of the genome from degradation, virus acquisition and transmission by insect vectors, infectivity, and systemic movement. The CP of monopartite geminiviruses is absolutely essential for virus movement. The protein is Capsid protein of Avena sativa (Oat).